A 527-amino-acid polypeptide reads, in one-letter code: ATP synthase subunit alpha (527 aa).

An ATP-binding site is contributed by 169 to 176 (GDRQTGKT).

This sequence belongs to the ATPase alpha/beta chains family. In terms of assembly, F-type ATPases have 2 components, CF(1) - the catalytic core - and CF(0) - the membrane proton channel. CF(1) has five subunits: alpha(3), beta(3), gamma(1), delta(1), epsilon(1). CF(0) has three main subunits: a(1), b(2) and c(9-12). The alpha and beta chains form an alternating ring which encloses part of the gamma chain. CF(1) is attached to CF(0) by a central stalk formed by the gamma and epsilon chains, while a peripheral stalk is formed by the delta and b chains.

It is found in the cell membrane. The catalysed reaction is ATP + H2O + 4 H(+)(in) = ADP + phosphate + 5 H(+)(out). Produces ATP from ADP in the presence of a proton gradient across the membrane. The alpha chain is a regulatory subunit. This chain is ATP synthase subunit alpha, found in Metamycoplasma arthritidis (strain 158L3-1) (Mycoplasma arthritidis).